Here is a 466-residue protein sequence, read N- to C-terminus: Putative chitinase 2 (466 aa).

Positions 1 to 17 (MYLTIWLVPLLAVGTWG) are cleaved as a signal peptide. Residues 20-380 (FNRFCHYNSW…MAVIHGLNAY (361 aa)) form the GH18 domain. Cysteines 24 and 49 form a disulfide. Glu141 serves as the catalytic Proton donor. The stretch at 395–447 (YNKKILRARVSLRNYRRRNQQGKVAEMEQRIRNLEQELQQSMGNMAYERQQAQ) forms a coiled coil.

It belongs to the glycosyl hydrolase 18 family. Prismatic layer of shell (at protein level). Expressed primarily in the mantle with highest level in the mantle edge and lower level in the mantle pallium.

It is found in the secreted. It catalyses the reaction Random endo-hydrolysis of N-acetyl-beta-D-glucosaminide (1-&gt;4)-beta-linkages in chitin and chitodextrins.. The polypeptide is Putative chitinase 2 (Margaritifera margaritifera (Freshwater pearl mussel)).